A 242-amino-acid chain; its full sequence is DNA-directed RNA polymerase III subunit rpc5 (242 aa).

Disordered stretches follow at residues M1 to Q22 and L153 to P172. The span at A155–P172 shows a compositional bias: low complexity.

In terms of assembly, component of the RNA polymerase III (Pol III) complex consisting of 17 subunits.

It is found in the cytoplasm. The protein localises to the nucleus. Functionally, DNA-dependent RNA polymerase catalyzes the transcription of DNA into RNA using the four ribonucleoside triphosphates as substrates. Specific peripheric component of RNA polymerase III which synthesizes small RNAs, such as 5S rRNA and tRNAs. The RPC53/RPC4-RPC37/RPC5 subcomplex is required for terminator recognition and reinitiation. The protein is DNA-directed RNA polymerase III subunit rpc5 (rpc37) of Schizosaccharomyces pombe (strain 972 / ATCC 24843) (Fission yeast).